A 297-amino-acid polypeptide reads, in one-letter code: MADGDSGSERGGSSGGLQHFQREQETQELASKRLDIQNKRFYLDVKQNAKGRFIKIAEVGAGGSKSRLTLSMSVAAEFRDYLGDFIEHYAQLGPSSPEQIAQSSGGDDGGPRRALKSEFLVRENRKYYLDLKENQRGRFLRIRQTVNRGPGFGVGGGGGPGGGVQAGQTIALPAQGLIEFRDALAKLIDDYGGEDEELSGGPGAAGGYGELPEGTSIMVDSKRFFFDVGSNKYGVFLRVSEVKPSYRNSITIPFKAWGKFGGAFSRYAEEMKEIQERHRDKMYERREESEGEDVDDD.

2 disordered regions span residues 1–26 (MADGDSGSERGGSSGGLQHFQREQET) and 275–297 (QERHRDKMYERREESEGEDVDDD). Position 2 is an N-acetylalanine (Ala2). Residues 23-246 (EQETQELASK…LRVSEVKPSY (224 aa)) are DNA-binding. Basic and acidic residues predominate over residues 275 to 288 (QERHRDKMYERREE).

This sequence belongs to the PUR DNA-binding protein family.

The protein localises to the nucleus. Its function is as follows. Transcriptional regulator which can act as an activator or a repressor. In Danio rerio (Zebrafish), this protein is Transcriptional regulator protein Pur-beta (purb).